The following is a 937-amino-acid chain: uncharacterized protein (937 aa).

T2 is modified (N-acetylthreonine). A disordered region spans residues N281–K937. The span at T290 to V308 shows a compositional bias: low complexity. T292 (charge relay system) is an active-site residue. 8 stretches are compositionally biased toward basic and acidic residues: residues E309 to Q402, A411 to A431, A469 to A489, A512 to A532, A600 to A615, A667 to A687, A738 to A758, and A780 to E872. Residues V345–E802 adopt a coiled-coil conformation. The span at E887–E897 shows a compositional bias: acidic residues. The segment covering A898 to K924 has biased composition (low complexity). Residues G925–K937 show a composition bias toward basic residues.

This sequence belongs to the AB hydrolase superfamily.

This is an uncharacterized protein from Dictyostelium discoideum (Social amoeba).